The primary structure comprises 131 residues: Small ribosomal subunit protein uS8 (131 aa).

The protein belongs to the universal ribosomal protein uS8 family. Part of the 30S ribosomal subunit. Contacts proteins S5 and S12.

In terms of biological role, one of the primary rRNA binding proteins, it binds directly to 16S rRNA central domain where it helps coordinate assembly of the platform of the 30S subunit. The protein is Small ribosomal subunit protein uS8 of Paraburkholderia phymatum (strain DSM 17167 / CIP 108236 / LMG 21445 / STM815) (Burkholderia phymatum).